The primary structure comprises 144 residues: 3-dehydroquinate dehydratase (144 aa).

Residue Tyr-24 is the Proton acceptor of the active site. The substrate site is built by Asn-73, His-79, and Asp-86. His-99 functions as the Proton donor in the catalytic mechanism. Residues 100-101 and Arg-110 contribute to the substrate site; that span reads LS.

Belongs to the type-II 3-dehydroquinase family. Homododecamer.

The catalysed reaction is 3-dehydroquinate = 3-dehydroshikimate + H2O. Its pathway is metabolic intermediate biosynthesis; chorismate biosynthesis; chorismate from D-erythrose 4-phosphate and phosphoenolpyruvate: step 3/7. In terms of biological role, catalyzes a trans-dehydration via an enolate intermediate. The chain is 3-dehydroquinate dehydratase from Shewanella sp. (strain MR-4).